The chain runs to 309 residues: Taste receptor type 2 member 31 (309 aa).

Topologically, residues 1-2 (MT) are extracellular. Residues 3 to 23 (TFIPIIFSSVVVVLFVIGNFA) form a helical membrane-spanning segment. Residues 24–55 (NGFIALVNSIERVKRQKISFADQILTALAVSR) are Cytoplasmic-facing. Residues 56-76 (VGLLWVLLLNWYSTVFNPAFY) traverse the membrane as a helical segment. Residues 77-100 (SVEVRTTAYNVWAVTGHFSNWLAT) are Extracellular-facing. A helical membrane pass occupies residues 101-121 (SLSIFYLLKIANFSNLIFLHL). Over 122–126 (KRRVK) the chain is Cytoplasmic. A helical transmembrane segment spans residues 127 to 147 (SVILVMLLGPLLFLACQLFVI). The Extracellular segment spans residues 148–181 (NMKEIVRTKEYEGNLTWKIKLRSAVYLSDATVTT). Asparagine 161 carries N-linked (GlcNAc...) asparagine glycosylation. Residues 182-202 (LGNLVPFTLTLLCFLLLICSL) traverse the membrane as a helical segment. The Cytoplasmic portion of the chain corresponds to 203-229 (CKHLKKMQLHGKGSQDPSTKVHIKALQ). The helical transmembrane segment at 230–250 (TVIFFLLLCAVYFLSIMISVW) threads the bilayer. Residues 251-259 (SFGSLENKP) are Extracellular-facing. A helical membrane pass occupies residues 260–280 (VFMFCKAIRFSYPSIHPFILI). The Cytoplasmic portion of the chain corresponds to 281–309 (WGNKKLKQTFLSVLRQVRYWVKGEKPSSP).

This sequence belongs to the G-protein coupled receptor T2R family. Expressed in subsets of taste receptor cells of the tongue and exclusively in gustducin-positive cells.

The protein localises to the membrane. Receptor that may play a role in the perception of bitterness and is gustducin-linked. May play a role in sensing the chemical composition of the gastrointestinal content. The activity of this receptor may stimulate alpha gustducin, mediate PLC-beta-2 activation and lead to the gating of TRPM5. Activated by the sulfonyl amide sweeteners saccharin and acesulfame K. In Homo sapiens (Human), this protein is Taste receptor type 2 member 31 (TAS2R31).